The chain runs to 287 residues: Small ribosomal subunit protein uS2 (287 aa).

The interval 235–287 is disordered; sequence ESGFATGGGDWEATAPAAASGWDDAAAQPQNWDSAAQGAASWDEAAAPKEGQW. Residues 247 to 261 are compositionally biased toward low complexity; sequence ATAPAAASGWDDAAA.

It belongs to the universal ribosomal protein uS2 family. As to quaternary structure, component of the small ribosomal subunit. Mature ribosomes consist of a small (40S) and a large (60S) subunit. The 40S subunit contains about 33 different proteins and 1 molecule of RNA (18S). The 60S subunit contains about 49 different proteins and 3 molecules of RNA (25S, 5.8S and 5S). Interacts with RPS21.

It localises to the cytoplasm. Required for the assembly and/or stability of the 40S ribosomal subunit. Required for the processing of the 20S rRNA-precursor to mature 18S rRNA in a late step of the maturation of 40S ribosomal subunits. The chain is Small ribosomal subunit protein uS2 from Pyricularia oryzae (strain 70-15 / ATCC MYA-4617 / FGSC 8958) (Rice blast fungus).